A 181-amino-acid chain; its full sequence is Ribulose bisphosphate carboxylase small subunit, chloroplastic 2 (181 aa).

A chloroplast-targeting transit peptide spans 1 to 57 (MASSVISSAAVATRTNVTQAGSMIAPFTGLKSAATFPVSRKQNLDITSIASNGGRVR).

It belongs to the RuBisCO small chain family. In terms of assembly, heterohexadecamer of 8 large and 8 small subunits.

It is found in the plastid. The protein localises to the chloroplast. Its function is as follows. RuBisCO catalyzes two reactions: the carboxylation of D-ribulose 1,5-bisphosphate, the primary event in carbon dioxide fixation, as well as the oxidative fragmentation of the pentose substrate. Both reactions occur simultaneously and in competition at the same active site. Although the small subunit is not catalytic it is essential for maximal activity. In Solanum tuberosum (Potato), this protein is Ribulose bisphosphate carboxylase small subunit, chloroplastic 2.